The primary structure comprises 209 residues: Ribonuclease HII (209 aa).

One can recognise an RNase H type-2 domain in the interval 25 to 209 (RRIAGIDEAG…ATFRGVREYL (185 aa)). Positions 31, 32, and 123 each coordinate a divalent metal cation.

This sequence belongs to the RNase HII family. Mn(2+) serves as cofactor. Requires Mg(2+) as cofactor.

It localises to the cytoplasm. The catalysed reaction is Endonucleolytic cleavage to 5'-phosphomonoester.. In terms of biological role, endonuclease that specifically degrades the RNA of RNA-DNA hybrids. The polypeptide is Ribonuclease HII (Syntrophotalea carbinolica (strain DSM 2380 / NBRC 103641 / GraBd1) (Pelobacter carbinolicus)).